A 539-amino-acid polypeptide reads, in one-letter code: Beta-agarase A (539 aa).

Residues 1–19 form the signal peptide; that stretch reads MKKNYLLLYFIFLLCGSIA. The GH16 domain occupies 21–289; sequence QDWNGIPVPA…WIRVYKPVAV (269 aa). Substrate is bound by residues Trp-73, 82–92, 96–98, and Glu-144; these read NAPQAWTNGSQ and QAQ. Glu-147 acts as the Nucleophile in catalysis. Glu-152 (proton donor) is an active-site residue. Substrate contacts are provided by Arg-176 and Asp-271. The tract at residues 332-353 is disordered; that stretch reads WANTNDIGSRDRGASNGRNNIN.

It belongs to the glycosyl hydrolase 16 family. As to quaternary structure, monomer. Proteolytically cleaved into mature beta-agarase A catalytic chain (AgaAc).

The protein resides in the secreted. It catalyses the reaction Hydrolysis of (1-&gt;4)-beta-D-galactosidic linkages in agarose, giving the tetramer as the predominant product.. Its function is as follows. Cleaves the beta-1,4-linkages between beta-D-galactose and alpha-L-3,6-anhydro-galactose residues in agarose. Cleaves agarose in a random manner with retention of the anomeric-bond configuration, producing beta-anomers that give rise progressively to alpha-anomers when mutarotation takes place. The polypeptide is Beta-agarase A (agaA) (Zobellia galactanivorans (strain DSM 12802 / CCUG 47099 / CIP 106680 / NCIMB 13871 / Dsij)).